A 475-amino-acid polypeptide reads, in one-letter code: Ribulose bisphosphate carboxylase large chain (475 aa).

Positions 1-2 are excised as a propeptide; it reads MS. Proline 3 is subject to N-acetylproline. An N6,N6,N6-trimethyllysine modification is found at lysine 14. Substrate-binding residues include asparagine 123 and threonine 173. The Proton acceptor role is filled by lysine 175. Residue lysine 177 participates in substrate binding. 3 residues coordinate Mg(2+): lysine 201, aspartate 203, and glutamate 204. Position 201 is an N6-carboxylysine (lysine 201). Histidine 294 acts as the Proton acceptor in catalysis. Substrate-binding residues include arginine 295, histidine 327, and serine 379.

This sequence belongs to the RuBisCO large chain family. Type I subfamily. Heterohexadecamer of 8 large chains and 8 small chains; disulfide-linked. The disulfide link is formed within the large subunit homodimers. Mg(2+) is required as a cofactor. In terms of processing, the disulfide bond which can form in the large chain dimeric partners within the hexadecamer appears to be associated with oxidative stress and protein turnover.

The protein resides in the plastid. Its subcellular location is the chloroplast. It carries out the reaction 2 (2R)-3-phosphoglycerate + 2 H(+) = D-ribulose 1,5-bisphosphate + CO2 + H2O. The catalysed reaction is D-ribulose 1,5-bisphosphate + O2 = 2-phosphoglycolate + (2R)-3-phosphoglycerate + 2 H(+). Functionally, ruBisCO catalyzes two reactions: the carboxylation of D-ribulose 1,5-bisphosphate, the primary event in carbon dioxide fixation, as well as the oxidative fragmentation of the pentose substrate in the photorespiration process. Both reactions occur simultaneously and in competition at the same active site. The chain is Ribulose bisphosphate carboxylase large chain from Illicium oligandrum (Star anise).